A 555-amino-acid chain; its full sequence is MKALKGSWAILLAIFFALVYLIPLNGRLLWQPDETRYAEISREMLQRGDWVVPHLLGLRYFEKPVAGYWFNNISQWLFGDTNFAVRFGSVFSTGMTALLVFALAMLMWRNARRASLATLIFLSMVLVFSIGTYSVLDPMISLWLAAAMVSYYLTLKATTAKGKLGGYVLLGLACGMGFMTKGFLALAVPVIAVIPIVIQQRRIKDLLIYGPVAIVVAVLLSLPWALAIAQREPDFWNYFFWVEHIQRFAEDNAQHKAPFWYYVPVLMAAVLPWLALLPGSLLKGWRERVQRPELFFLLSWVMMPLIFFSIAKGKLPTYILPCMAPLALLMAAYAEDCVAALRSKVFKVNAVLNGLFGLICILALVVLGSGLLPKVHLFTAQEWPKIVIGIIAFAGWLLFAVVSVRNNAQRWSWAAACPLLLCLLIGYAIPQQVTDSKLPQNFIRVNMAELGHSRYVLTDSVGVAAGLAWELKRSDVLMFNQKGEVSYGLEYPDARSHLISDSDFPQWLAQARKQGDVSLVLQLSRGESIDQQKLPKADKVEVMNRLALFWYQQQP.

11 consecutive transmembrane segments (helical) span residues 6-26 (GSWA…PLNG), 87-107 (FGSV…AMLM), 116-136 (LATL…YSVL), 178-198 (FMTK…PIVI), 206-226 (LLIY…PWAL), 257-277 (APFW…LALL), 293-313 (ELFF…IAKG), 315-335 (LPTY…AYAE), 351-371 (VLNG…GSGL), 384-404 (PKIV…VVSV), and 411-431 (WSWA…AIPQ).

Belongs to the glycosyltransferase 83 family.

Its subcellular location is the cell inner membrane. The catalysed reaction is 4-amino-4-deoxy-alpha-L-arabinopyranosyl di-trans,octa-cis-undecaprenyl phosphate + lipid IVA = lipid IIA + di-trans,octa-cis-undecaprenyl phosphate.. Its pathway is lipopolysaccharide metabolism; 4-amino-4-deoxy-beta-L-arabinose-lipid A biosynthesis. Catalyzes the transfer of the L-Ara4N moiety of the glycolipid undecaprenyl phosphate-alpha-L-Ara4N to lipid A. The modified arabinose is attached to lipid A and is required for resistance to polymyxin and cationic antimicrobial peptides. The protein is Undecaprenyl phosphate-alpha-4-amino-4-deoxy-L-arabinose arabinosyl transferase of Serratia proteamaculans (strain 568).